A 393-amino-acid polypeptide reads, in one-letter code: Probable WRKY transcription factor 25 (393 aa).

The WRKY 1 DNA-binding region spans 160–224 (MVSRNSNDGY…YKGGHNHPKP (65 aa)). Zn(2+) is bound by residues Cys191, Cys196, His219, and His221. Disordered regions lie at residues 217 to 242 (GGHN…VNGR) and 277 to 303 (SEYG…DEGM). The span at 229 to 240 (RPSQSSLPSSVN) shows a compositional bias: polar residues. Residues 289–298 (PEMKRMKREG) are compositionally biased toward basic and acidic residues. A DNA-binding region (WRKY 2) is located at residues 322 to 387 (SDIDVLIDGF…YEGRHNHDIP (66 aa)). Cys353, Cys358, His382, and His384 together coordinate Zn(2+).

Belongs to the WRKY group I family. As to quaternary structure, interacts with MKS1. Interacts with SIB1. Interacts with VQ10 and CAMBP25/VQ15. Phosphorylated by MPK4. Highly expressed in roots and at lower levels in leaves, stems and seeds.

The protein resides in the nucleus. Its function is as follows. Transcription factor. Interacts specifically with the W box (5'-(T)TGAC[CT]-3'), a frequently occurring elicitor-responsive cis-acting element. Functions with WRKY33 as positive regulator of salt stress response and abscisic acid (ABA) signaling. Plays a partial role in heat stress tolerance. Functions with WRKY26 and WRKY33 as positive regulator of plant thermotolerance by partially participating in ethylene-response signal transduction pathway. The sequence is that of Probable WRKY transcription factor 25 (WRKY25) from Arabidopsis thaliana (Mouse-ear cress).